The chain runs to 3412 residues: Genome polyprotein (3412 aa).

The interval 2–15 (SKKPGKPGRNRVVN) is interaction with host EXOC1. The Cytoplasmic segment spans residues 2 to 108 (SKKPGKPGRN…PSKKRGGTRS (107 aa)). The segment at 37–72 (LLDGRGPVRFILAILTFFRFTALQPTEALKRRWRAV) is hydrophobic; homodimerization of capsid protein C. The propeptide at 104–121 (GGTRSLLGLAALIGLASS) is ER anchor for the capsid protein C, removed in mature form by serine protease NS3. A helical membrane pass occupies residues 109–129 (LLGLAALIGLASSLQLSTYQG). At 130–247 (KVLMSINKTD…TTKYLTKVEN (118 aa)) the chain is on the extracellular side. Asn-136 carries N-linked (GlcNAc...) asparagine; by host glycosylation. A helical transmembrane segment spans residues 248–268 (WVLRNPGYALVALAIGWMLGS). At 269 to 273 (NNTQR) the chain is on the cytoplasmic side. The helical transmembrane segment at 274 to 288 (VVFVIMLMLIAPAYS) threads the bilayer. Residues 289–741 (FNCLGTSNRD…QVFGGAFRTL (453 aa)) lie on the Extracellular side of the membrane. 8 cysteine pairs are disulfide-bonded: Cys-291/Cys-318, Cys-348/Cys-404, Cys-348/Cys-409, Cys-362/Cys-393, Cys-380/Cys-404, Cys-380/Cys-409, Cys-478/Cys-576, and Cys-593/Cys-624. Residues 386 to 399 (DRGWGNGCGLFGKG) form a fusion peptide region. A helical membrane pass occupies residues 742-762 (FGGMSWITQGLLGALLLWMGL). The Cytoplasmic portion of the chain corresponds to 763-768 (QARDRS). Residues 769–789 (ISLTLLAVGGILIFLATSVQA) form a helical membrane-spanning segment. Topologically, residues 790–1214 (DSGCAIDLQR…AFAEMNTGGD (425 aa)) are extracellular. Disulfide bonds link Cys-793–Cys-804 and Cys-844–Cys-932. Residues Asn-919, Asn-964, and Asn-996 are each glycosylated (N-linked (GlcNAc...) asparagine; by host). 6 disulfide bridges follow: Cys-968/Cys-1012, Cys-1069/Cys-1118, Cys-1080/Cys-1101, Cys-1080/Cys-1102, Cys-1101/Cys-1105, and Cys-1102/Cys-1105. Residues 1215 to 1235 (VIHLALVAVFKVQPAFLAGLF) traverse the membrane as a helical segment. Residues 1236–1245 (LRMQWSNQEN) lie on the Cytoplasmic side of the membrane. The chain crosses the membrane as a helical span at residues 1246-1266 (ILMVIGAAFLQMAANDLKLEV). Over 1267 to 1288 (LPILNAMSIAWMLIRAMKEGKV) the chain is Lumenal. A helical transmembrane segment spans residues 1289–1303 (AMYALPILCALTPGM). Arg-1304 is a topological domain (cytoplasmic). A helical transmembrane segment spans residues 1305-1325 (MAGLDVIRCLLLIIGIVTLLN). The Lumenal portion of the chain corresponds to 1326–1339 (ERRESVAKKKGGYL). Residues 1340 to 1360 (LAAALCQAGVCSPLIMMGGLI) form a helical membrane-spanning segment. Residues 1361–1369 (LAHPNGKRS) are Cytoplasmic-facing. The helical transmembrane segment at 1370 to 1390 (WPASEVLTGVGLMCALAGGLL) threads the bilayer. Over 1391 to 1393 (EFE) the chain is Lumenal. A helical transmembrane segment spans residues 1394-1414 (ETSMVVPFAIAGLMYITYTVS). The Cytoplasmic portion of the chain corresponds to 1415–1471 (GKAAEMWIEKAADITWEQNAEITGTSPRLDVDLDSHGNFKLLNDPGAPVHLFALRFI). Residues 1422 to 1461 (IEKAADITWEQNAEITGTSPRLDVDLDSHGNFKLLNDPGA) are interacts with and activates NS3 protease. An intramembrane region (helical) is located at residues 1472 to 1492 (LLGLSARFHWFIPFGVLGFWL). At 1493-2167 (LGKHSKRGGA…KEALAELPDS (675 aa)) the chain is on the cytoplasmic side. The 178-residue stretch at 1500–1677 (GGALWDVPSP…ERTEEPIPDA (178 aa)) folds into the Peptidase S7 domain. Catalysis depends on charge relay system; for serine protease NS3 activity residues His-1550, Asp-1574, and Ser-1634. Residues 1680-1836 (EEMLRKRKLT…DSNSPILDVE (157 aa)) form the Helicase ATP-binding domain. Residues 1684-1687 (RKRK) are important for RNA-binding. An ATP-binding site is contributed by 1693–1700 (LHPGAGKT). Positions 1784-1787 (DEAH) match the DEAH box motif. The region spanning 1847–2011 (GYEWITNFTG…GLVAQMYQPE (165 aa)) is the Helicase C-terminal domain. Residues 2162–2166 (AELPD) are regulates the ATPase activity of NS3 helicase. Residues 2168–2188 (LETLLLIGMLCVMSMGTFIFL) form a helical membrane-spanning segment. Residues 2189 to 2193 (MNRKG) are Lumenal-facing. Positions 2194–2214 (VGKMGLGAFVMTLATALLWAA) form an intramembrane region, helical. Position 2215 (Glu-2215) is a topological domain, lumenal. A helical transmembrane segment spans residues 2216–2236 (VPGTQIAGVLLIVFLLMIVLI). At 2237 to 2251 (PEPEKQRSQTDNQLA) the chain is on the cytoplasmic side. Residues 2252–2266 (VFLICIMTLMGVVAA) traverse the membrane as a helical segment. Topologically, residues 2267 to 2308 (NEMGLLEKTKSDIAKLFGSQPGSVGFATRTTPWDISLDIKPA) are lumenal. Positions 2309–2329 (TAWALYAAATMVMTPLIKHLI) form an intramembrane region, helical. Residues 2330–2376 (TTQYVNFSLTAIASQAGVLLGLTNGMPFTAMDLSVPLLVLGCWNQMT) are Lumenal-facing. A helical transmembrane segment spans residues 2377 to 2397 (LPSLAVAVMLLAIHYAFMIPG). Residues 2398-2440 (WQAEAMRAAQRRTAAGIMKNAVVDGIVATDIPDLSPATPMTEK) are Cytoplasmic-facing. Residues 2441–2461 (KMGQILLIAAAVLAVLVRPGI) form a helical membrane-spanning segment. The Lumenal portion of the chain corresponds to 2462–2466 (CSIKE). Residues 2467–2487 (FGVLGSAALVTLIEGTAGVVW) traverse the membrane as a helical segment. Residues 2488–3412 (NCTTAVGLCN…IGEEEYRDYM (925 aa)) are Cytoplasmic-facing. The mRNA cap 0-1 NS5-type MT domain maps to 2525–2790 (GGGKGATLGE…DVNLGSGTRS (266 aa)). Residue Ser-2580 coordinates S-adenosyl-L-methionine. The residue at position 2580 (Ser-2580) is a Phosphoserine. Lys-2585 functions as the For 2'-O-MTase activity in the catalytic mechanism. S-adenosyl-L-methionine contacts are provided by Gly-2610, Trp-2611, Thr-2628, Lys-2629, Asp-2655, and Val-2656. Residue Asp-2670 is the For 2'-O-MTase activity of the active site. An S-adenosyl-L-methionine-binding site is contributed by Ile-2671. Active-site for 2'-O-MTase activity residues include Lys-2706 and Glu-2742. Tyr-2744 provides a ligand contact to S-adenosyl-L-methionine. The segment covering 2771 to 2780 (QNRSGPRYEE) has biased composition (basic and acidic residues). Residues 2771-2791 (QNRSGPRYEEDVNLGSGTRSV) are disordered. Zn(2+)-binding residues include Glu-2964, His-2968, Cys-2973, and Cys-2976. The 153-residue stretch at 3054–3206 (GKMYADDTAG…KPIDDRFATA (153 aa)) folds into the RdRp catalytic domain. The Zn(2+) site is built by His-3241, Cys-3257, and Cys-3376.

The protein in the N-terminal section; belongs to the class I-like SAM-binding methyltransferase superfamily. mRNA cap 0-1 NS5-type methyltransferase family. In terms of assembly, homodimer. Interacts (via N-terminus) with host EXOC1 (via C-terminus); this interaction results in EXOC1 degradation through the proteasome degradation pathway. As to quaternary structure, forms heterodimers with envelope protein E in the endoplasmic reticulum and Golgi. Homodimer; in the endoplasmic reticulum and Golgi. Interacts with protein prM. Interacts with non-structural protein 1. In terms of assembly, homodimer; Homohexamer when secreted. Interacts with envelope protein E. NS1 interacts with NS4B. Interacts with host complement protein CFH; this interaction leads to the degradation of C3. As to quaternary structure, interacts (via N-terminus) with serine protease NS3. Forms a heterodimer with serine protease NS3. May form homooligomers. In terms of assembly, forms a heterodimer with NS2B. Interacts with non-structural protein 2A (via N-terminus). Interacts with NS4B. Interacts with unphosphorylated RNA-directed RNA polymerase NS5; this interaction stimulates RNA-directed RNA polymerase NS5 guanylyltransferase activity. As to quaternary structure, interacts with serine protease NS3. Homodimer. Interacts with host STAT2; this interaction inhibits the phosphorylation of the latter, and, when all viral proteins are present (polyprotein), targets STAT2 for degradation. Interacts with serine protease NS3. In terms of processing, specific enzymatic cleavages in vivo yield mature proteins. Cleavages in the lumen of endoplasmic reticulum are performed by host signal peptidase, whereas cleavages in the cytoplasmic side are performed by serine protease NS3. Signal cleavage at the 2K-4B site requires a prior NS3 protease-mediated cleavage at the 4A-2K site. Post-translationally, cleaved in post-Golgi vesicles by a host furin, releasing the mature small envelope protein M, and peptide pr. This cleavage is incomplete as up to 30% of viral particles still carry uncleaved prM. N-glycosylated. In terms of processing, N-glycosylated. The excreted form is glycosylated and this is required for efficient secretion of the protein from infected cells. Post-translationally, phosphorylated on serines residues. This phosphorylation may trigger NS5 nuclear localization.

Its subcellular location is the virion. The protein localises to the host nucleus. It is found in the host cytoplasm. It localises to the host perinuclear region. The protein resides in the secreted. Its subcellular location is the virion membrane. The protein localises to the host endoplasmic reticulum membrane. It catalyses the reaction Selective hydrolysis of -Xaa-Xaa-|-Yaa- bonds in which each of the Xaa can be either Arg or Lys and Yaa can be either Ser or Ala.. The enzyme catalyses RNA(n) + a ribonucleoside 5'-triphosphate = RNA(n+1) + diphosphate. The catalysed reaction is a ribonucleoside 5'-triphosphate + H2O = a ribonucleoside 5'-diphosphate + phosphate + H(+). It carries out the reaction ATP + H2O = ADP + phosphate + H(+). It catalyses the reaction a 5'-end (5'-triphosphoguanosine)-ribonucleoside in mRNA + S-adenosyl-L-methionine = a 5'-end (N(7)-methyl 5'-triphosphoguanosine)-ribonucleoside in mRNA + S-adenosyl-L-homocysteine. The enzyme catalyses a 5'-end (N(7)-methyl 5'-triphosphoguanosine)-ribonucleoside in mRNA + S-adenosyl-L-methionine = a 5'-end (N(7)-methyl 5'-triphosphoguanosine)-(2'-O-methyl-ribonucleoside) in mRNA + S-adenosyl-L-homocysteine + H(+). Its function is as follows. Plays a role in virus budding by binding to the cell membrane and gathering the viral RNA into a nucleocapsid that forms the core of a mature virus particle. During virus entry, may induce genome penetration into the host cytoplasm after hemifusion induced by the surface proteins. Can migrate to the cell nucleus where it modulates host functions. Overcomes the anti-viral effects of host EXOC1 by sequestering and degrading the latter through the proteasome degradation pathway. Inhibits RNA silencing by interfering with host Dicer. In terms of biological role, prevents premature fusion activity of envelope proteins in trans-Golgi by binding to envelope protein E at pH6.0. After virion release in extracellular space, gets dissociated from E dimers. Functionally, acts as a chaperone for envelope protein E during intracellular virion assembly by masking and inactivating envelope protein E fusion peptide. prM is the only viral peptide matured by host furin in the trans-Golgi network probably to avoid catastrophic activation of the viral fusion activity in acidic Golgi compartment prior to virion release. prM-E cleavage is inefficient, and many virions are only partially matured. These uncleaved prM would play a role in immune evasion. Its function is as follows. May play a role in virus budding. Exerts cytotoxic effects by activating a mitochondrial apoptotic pathway through M ectodomain. May display a viroporin activity. Binds to host cell surface receptor and mediates fusion between viral and cellular membranes. Envelope protein is synthesized in the endoplasmic reticulum in the form of heterodimer with protein prM. They play a role in virion budding in the ER, and the newly formed immature particle is covered with 60 spikes composed of heterodimer between precursor prM and envelope protein E. The virion is transported to the Golgi apparatus where the low pH causes dissociation of PrM-E heterodimers and formation of E homodimers. prM-E cleavage is inefficient, and many virions are only partially matured. These uncleaved prM would play a role in immune evasion. In terms of biological role, involved in immune evasion, pathogenesis and viral replication. Once cleaved off the polyprotein, is targeted to three destinations: the viral replication cycle, the plasma membrane and the extracellular compartment. Essential for viral replication. Required for formation of the replication complex and recruitment of other non-structural proteins to the ER-derived membrane structures. Excreted as a hexameric lipoparticle that plays a role against host immune response. Antagonizing the complement function. Binds to the host macrophages and dendritic cells. Inhibits signal transduction originating from Toll-like receptor 3 (TLR3). Functionally, component of the viral RNA replication complex that functions in virion assembly and antagonizes the host alpha/beta interferon antiviral response. Its function is as follows. Required cofactor for the serine protease function of NS3. May have membrane-destabilizing activity and form viroporins. Displays three enzymatic activities: serine protease, NTPase and RNA helicase. NS3 serine protease, in association with NS2B, performs its autocleavage and cleaves the polyprotein at dibasic sites in the cytoplasm: C-prM, NS2A-NS2B, NS2B-NS3, NS3-NS4A, NS4A-2K and NS4B-NS5. NS3 RNA helicase binds RNA and unwinds dsRNA in the 3' to 5' direction. In terms of biological role, regulates the ATPase activity of the NS3 helicase activity. NS4A allows NS3 helicase to conserve energy during unwinding. Functionally, functions as a signal peptide for NS4B and is required for the interferon antagonism activity of the latter. Its function is as follows. Induces the formation of ER-derived membrane vesicles where the viral replication takes place. Inhibits interferon (IFN)-induced host STAT1 phosphorylation and nuclear translocation, thereby preventing the establishment of cellular antiviral state by blocking the IFN-alpha/beta pathway. Inhibits STAT2 translocation in the nucleus after IFN-alpha treatment. Replicates the viral (+) and (-) RNA genome, and performs the capping of genomes in the cytoplasm. NS5 methylates viral RNA cap at guanine N-7 and ribose 2'-O positions. Besides its role in RNA genome replication, also prevents the establishment of cellular antiviral state by blocking the interferon-alpha/beta (IFN-alpha/beta) signaling pathway. Inhibits host TYK2 and STAT2 phosphorylation, thereby preventing activation of JAK-STAT signaling pathway. In Agelaius tricolor (Tricolored blackbird), this protein is Genome polyprotein.